We begin with the raw amino-acid sequence, 92 residues long: Small ribosomal subunit protein uS19 (92 aa).

This sequence belongs to the universal ribosomal protein uS19 family.

Functionally, protein S19 forms a complex with S13 that binds strongly to the 16S ribosomal RNA. The protein is Small ribosomal subunit protein uS19 of Caulobacter vibrioides (strain ATCC 19089 / CIP 103742 / CB 15) (Caulobacter crescentus).